A 269-amino-acid chain; its full sequence is Interleukin-1 beta (269 aa).

Positions 1 to 116 (MAEVPELASE…TWDNEAYVHD (116 aa)) are cleaved as a propeptide — removed in mature form; by CASP1. The Involved in interaction with TMED10 C-terminus signature appears at 228–241 (FESAQFPNWYISTS).

The protein belongs to the IL-1 family. As to quaternary structure, monomer. In its precursor form, weakly interacts with full-length MEFV; the mature cytokine does not interact at all. Interacts with integrins ITGAV:ITGBV and ITGA5:ITGB1; integrin-binding is required for IL1B signaling. Interacts with cargo receptor TMED10; the interaction is direct and is required for the secretion of IL1B mature form. Interacts with HSP90AB1; the interaction facilitates cargo translocation into the ERGIC. Interacts with HSP90B1; the interaction facilitates cargo translocation into the ERGIC. Post-translationally, activation of the IL1B precursor involves a CASP1-catalyzed proteolytic cleavage. Processing and secretion are temporarily associated. (Microbial infection) Cleavage by S.pyogenes cysteine protease SpeB promotes its activation independently of CASP1. As to expression, expressed in activated monocytes/macrophages (at protein level).

Its subcellular location is the cytoplasm. The protein localises to the cytosol. It is found in the secreted. It localises to the lysosome. The protein resides in the extracellular exosome. With respect to regulation, (Microbial infection) Cleavage by S.pyogenes cysteine protease SpeB promotes its activation independently of CASP1. SpeB-mediated maturation of IL1B plays a dual role depending on infection site: while IL1B inflammatory response prevents bacterial growth during invasive skin infections, it promotes streptococcal infection of the nasopharynx by disrupting colonization resistance mediated by the microbiota. In terms of biological role, potent pro-inflammatory cytokine. Initially discovered as the major endogenous pyrogen, induces prostaglandin synthesis, neutrophil influx and activation, T-cell activation and cytokine production, B-cell activation and antibody production, and fibroblast proliferation and collagen production. Promotes Th17 differentiation of T-cells. Synergizes with IL12/interleukin-12 to induce IFNG synthesis from T-helper 1 (Th1) cells. Plays a role in angiogenesis by inducing VEGF production synergistically with TNF and IL6. Involved in transduction of inflammation downstream of pyroptosis: its mature form is specifically released in the extracellular milieu by passing through the gasdermin-D (GSDMD) pore. Acts as a sensor of S.pyogenes infection in skin: cleaved and activated by pyogenes SpeB protease, leading to an inflammatory response that prevents bacterial growth during invasive skin infection. The sequence is that of Interleukin-1 beta from Homo sapiens (Human).